The primary structure comprises 294 residues: ATP synthase gamma chain (294 aa).

Belongs to the ATPase gamma chain family. F-type ATPases have 2 components, CF(1) - the catalytic core - and CF(0) - the membrane proton channel. CF(1) has five subunits: alpha(3), beta(3), gamma(1), delta(1), epsilon(1). CF(0) has three main subunits: a, b and c.

The protein localises to the cell inner membrane. In terms of biological role, produces ATP from ADP in the presence of a proton gradient across the membrane. The gamma chain is believed to be important in regulating ATPase activity and the flow of protons through the CF(0) complex. The chain is ATP synthase gamma chain from Mesorhizobium japonicum (strain LMG 29417 / CECT 9101 / MAFF 303099) (Mesorhizobium loti (strain MAFF 303099)).